Consider the following 427-residue polypeptide: Adenylosuccinate synthetase (427 aa).

Residues 12-18 (GDEGKGK) and 40-42 (GHT) contribute to the GTP site. Asp-13 serves as the catalytic Proton acceptor. Residues Asp-13 and Gly-40 each contribute to the Mg(2+) site. Residues 13–16 (DEGK), 38–41 (NAGH), Thr-128, Arg-142, Gln-223, Thr-238, and Arg-302 contribute to the IMP site. The active-site Proton donor is His-41. 298–304 (TTTGRPR) is a substrate binding site. GTP is bound by residues Arg-304, 330–332 (SID), and 412–414 (SVG).

This sequence belongs to the adenylosuccinate synthetase family. As to quaternary structure, homodimer. It depends on Mg(2+) as a cofactor.

Its subcellular location is the cytoplasm. The catalysed reaction is IMP + L-aspartate + GTP = N(6)-(1,2-dicarboxyethyl)-AMP + GDP + phosphate + 2 H(+). The protein operates within purine metabolism; AMP biosynthesis via de novo pathway; AMP from IMP: step 1/2. Plays an important role in the de novo pathway of purine nucleotide biosynthesis. Catalyzes the first committed step in the biosynthesis of AMP from IMP. This is Adenylosuccinate synthetase from Staphylococcus epidermidis (strain ATCC 35984 / DSM 28319 / BCRC 17069 / CCUG 31568 / BM 3577 / RP62A).